The chain runs to 217 residues: Protein GrpE (217 aa).

Belongs to the GrpE family. In terms of assembly, homodimer.

The protein resides in the cytoplasm. In terms of biological role, participates actively in the response to hyperosmotic and heat shock by preventing the aggregation of stress-denatured proteins, in association with DnaK and GrpE. It is the nucleotide exchange factor for DnaK and may function as a thermosensor. Unfolded proteins bind initially to DnaJ; upon interaction with the DnaJ-bound protein, DnaK hydrolyzes its bound ATP, resulting in the formation of a stable complex. GrpE releases ADP from DnaK; ATP binding to DnaK triggers the release of the substrate protein, thus completing the reaction cycle. Several rounds of ATP-dependent interactions between DnaJ, DnaK and GrpE are required for fully efficient folding. In Mycoplasma pneumoniae (strain ATCC 29342 / M129 / Subtype 1) (Mycoplasmoides pneumoniae), this protein is Protein GrpE.